Here is a 227-residue protein sequence, read N- to C-terminus: tRNA (guanine-N(1)-)-methyltransferase (227 aa).

S-adenosyl-L-methionine-binding positions include glycine 111 and 135-140; that span reads LGDYVL.

It belongs to the RNA methyltransferase TrmD family. As to quaternary structure, homodimer.

It is found in the cytoplasm. It carries out the reaction guanosine(37) in tRNA + S-adenosyl-L-methionine = N(1)-methylguanosine(37) in tRNA + S-adenosyl-L-homocysteine + H(+). Functionally, specifically methylates guanosine-37 in various tRNAs. The protein is tRNA (guanine-N(1)-)-methyltransferase of Leifsonia xyli subsp. xyli (strain CTCB07).